Here is a 361-residue protein sequence, read N- to C-terminus: D-alanine--D-alanine ligase (361 aa).

The ATP-grasp domain occupies 134–344; the sequence is KILAQRAGVP…YTDLITKLID (211 aa). 169–224 is an ATP binding site; sequence ASQLGSDLFVKPSNQGSSVGVSHVTNEKEYKVALAEAFKYDDKVLVEETVHGTEVE. Residues aspartate 297, glutamate 311, and asparagine 313 each coordinate Mg(2+).

This sequence belongs to the D-alanine--D-alanine ligase family. The cofactor is Mg(2+). It depends on Mn(2+) as a cofactor.

Its subcellular location is the cytoplasm. It carries out the reaction 2 D-alanine + ATP = D-alanyl-D-alanine + ADP + phosphate + H(+). It functions in the pathway cell wall biogenesis; peptidoglycan biosynthesis. Cell wall formation. The polypeptide is D-alanine--D-alanine ligase (Lactobacillus gasseri (strain ATCC 33323 / DSM 20243 / BCRC 14619 / CIP 102991 / JCM 1131 / KCTC 3163 / NCIMB 11718 / NCTC 13722 / AM63)).